Reading from the N-terminus, the 732-residue chain is 1,4-alpha-glucan branching enzyme GlgB (732 aa).

Asp-409 serves as the catalytic Nucleophile. The active-site Proton donor is the Glu-462.

The protein belongs to the glycosyl hydrolase 13 family. GlgB subfamily. In terms of assembly, monomer.

It catalyses the reaction Transfers a segment of a (1-&gt;4)-alpha-D-glucan chain to a primary hydroxy group in a similar glucan chain.. The protein operates within glycan biosynthesis; glycogen biosynthesis. In terms of biological role, catalyzes the formation of the alpha-1,6-glucosidic linkages in glycogen by scission of a 1,4-alpha-linked oligosaccharide from growing alpha-1,4-glucan chains and the subsequent attachment of the oligosaccharide to the alpha-1,6 position. This chain is 1,4-alpha-glucan branching enzyme GlgB, found in Corynebacterium diphtheriae (strain ATCC 700971 / NCTC 13129 / Biotype gravis).